A 184-amino-acid polypeptide reads, in one-letter code: Ribosome maturation factor RimM (184 aa).

The PRC barrel domain maps to 104–184 (SEDEFYWREL…RIEVDWDPGF (81 aa)).

Belongs to the RimM family. In terms of assembly, binds ribosomal protein uS19.

The protein resides in the cytoplasm. In terms of biological role, an accessory protein needed during the final step in the assembly of 30S ribosomal subunit, possibly for assembly of the head region. Essential for efficient processing of 16S rRNA. May be needed both before and after RbfA during the maturation of 16S rRNA. It has affinity for free ribosomal 30S subunits but not for 70S ribosomes. This chain is Ribosome maturation factor RimM, found in Vibrio atlanticus (strain LGP32) (Vibrio splendidus (strain Mel32)).